Consider the following 225-residue polypeptide: Enolase-phosphatase E1 (225 aa).

The protein belongs to the HAD-like hydrolase superfamily. MasA/MtnC family. As to quaternary structure, monomer. Mg(2+) serves as cofactor.

It carries out the reaction 5-methylsulfanyl-2,3-dioxopentyl phosphate + H2O = 1,2-dihydroxy-5-(methylsulfanyl)pent-1-en-3-one + phosphate. It participates in amino-acid biosynthesis; L-methionine biosynthesis via salvage pathway; L-methionine from S-methyl-5-thio-alpha-D-ribose 1-phosphate: step 3/6. The protein operates within amino-acid biosynthesis; L-methionine biosynthesis via salvage pathway; L-methionine from S-methyl-5-thio-alpha-D-ribose 1-phosphate: step 4/6. Functionally, bifunctional enzyme that catalyzes the enolization of 2,3-diketo-5-methylthiopentyl-1-phosphate (DK-MTP-1-P) into the intermediate 2-hydroxy-3-keto-5-methylthiopentenyl-1-phosphate (HK-MTPenyl-1-P), which is then dephosphorylated to form the acireductone 1,2-dihydroxy-3-keto-5-methylthiopentene (DHK-MTPene). In Shewanella loihica (strain ATCC BAA-1088 / PV-4), this protein is Enolase-phosphatase E1.